Consider the following 373-residue polypeptide: Probable peptidoglycan glycosyltransferase FtsW (373 aa).

The next 9 membrane-spanning stretches (helical) occupy residues 15 to 35, 48 to 68, 80 to 100, 144 to 164, 168 to 188, 192 to 212, 278 to 298, 311 to 331, and 342 to 362; these read LVIL…VYSA, FYFL…MAVA, AVPI…PGIG, FFST…LILL, DLGA…AAGT, YIIA…MNVD, LGLI…LRGV, FLAF…MAVV, and LPFI…VGIL.

The protein belongs to the SEDS family. FtsW subfamily.

The protein resides in the cell inner membrane. The catalysed reaction is [GlcNAc-(1-&gt;4)-Mur2Ac(oyl-L-Ala-gamma-D-Glu-L-Lys-D-Ala-D-Ala)](n)-di-trans,octa-cis-undecaprenyl diphosphate + beta-D-GlcNAc-(1-&gt;4)-Mur2Ac(oyl-L-Ala-gamma-D-Glu-L-Lys-D-Ala-D-Ala)-di-trans,octa-cis-undecaprenyl diphosphate = [GlcNAc-(1-&gt;4)-Mur2Ac(oyl-L-Ala-gamma-D-Glu-L-Lys-D-Ala-D-Ala)](n+1)-di-trans,octa-cis-undecaprenyl diphosphate + di-trans,octa-cis-undecaprenyl diphosphate + H(+). Its pathway is cell wall biogenesis; peptidoglycan biosynthesis. Functionally, peptidoglycan polymerase that is essential for cell division. This chain is Probable peptidoglycan glycosyltransferase FtsW, found in Geobacter sulfurreducens (strain DL-1 / KN400).